Here is a 362-residue protein sequence, read N- to C-terminus: Divinyl chlorophyll a/b light-harvesting protein PcbF (362 aa).

Helical transmembrane passes span 27 to 47 (FIGSHVAHTGLICFAAGANTL), 89 to 109 (IAFIGVFHLICSMVYAGAGLL), 150 to 170 (FILGHHLIFFGVACIWFVEWA), 211 to 231 (VMGGHAFLAFVEITGGAFHIA), 251 to 271 (AVLSWSLAGIGWMAIIAAFWC), and 316 to 336 (LANVHYYLGFFFIQGHLWHAI).

Belongs to the PsbB/PsbC family. IsiA/Pcb subfamily. The antenna complex consists of divinyl chlorophylls (a and b) and divinyl chlorophyll a/b binding proteins and binds more divinyl chlorophyll b than does the antenna complex from high-light-adapted Prochlorococcus. It depends on divinyl chlorophyll a as a cofactor. The cofactor is divinyl chlorophyll b.

Its subcellular location is the cellular thylakoid membrane. The antenna complex functions as a light receptor, it captures and delivers excitation energy to photosystems II and I. The Prochlorales pcb genes are not related to higher plant LHCs. This is Divinyl chlorophyll a/b light-harvesting protein PcbF (pcbF) from Prochlorococcus marinus (strain NATL2A).